A 206-amino-acid polypeptide reads, in one-letter code: Holliday junction branch migration complex subunit RuvA (206 aa).

The tract at residues 1–63 (MIASLRGTVI…EDAMKLYGFI (63 aa)) is domain I. The interval 64–142 (DNESREMFSV…AFAAGVVDEG (79 aa)) is domain II. The flexible linker stretch occupies residues 143 to 153 (GEQISLPNANI). The domain III stretch occupies residues 154 to 206 (ASEVVVEQVSQALVGLGFSEKQSDDAVSFVLAADPSLDTSGALRAALAKLSGK).

It belongs to the RuvA family. Homotetramer. Forms an RuvA(8)-RuvB(12)-Holliday junction (HJ) complex. HJ DNA is sandwiched between 2 RuvA tetramers; dsDNA enters through RuvA and exits via RuvB. An RuvB hexamer assembles on each DNA strand where it exits the tetramer. Each RuvB hexamer is contacted by two RuvA subunits (via domain III) on 2 adjacent RuvB subunits; this complex drives branch migration. In the full resolvosome a probable DNA-RuvA(4)-RuvB(12)-RuvC(2) complex forms which resolves the HJ.

The protein resides in the cytoplasm. The RuvA-RuvB-RuvC complex processes Holliday junction (HJ) DNA during genetic recombination and DNA repair, while the RuvA-RuvB complex plays an important role in the rescue of blocked DNA replication forks via replication fork reversal (RFR). RuvA specifically binds to HJ cruciform DNA, conferring on it an open structure. The RuvB hexamer acts as an ATP-dependent pump, pulling dsDNA into and through the RuvAB complex. HJ branch migration allows RuvC to scan DNA until it finds its consensus sequence, where it cleaves and resolves the cruciform DNA. The polypeptide is Holliday junction branch migration complex subunit RuvA (Corynebacterium glutamicum (strain ATCC 13032 / DSM 20300 / JCM 1318 / BCRC 11384 / CCUG 27702 / LMG 3730 / NBRC 12168 / NCIMB 10025 / NRRL B-2784 / 534)).